The primary structure comprises 443 residues: Cyclic GMP-AMP synthase (443 aa).

Serine 61 serves as a coordination point for ATP. Active-site residues include aspartate 78 and aspartate 80. Residue aspartate 80 coordinates Mg(2+). Asparagine 124 contacts ATP. Aspartate 138 is a catalytic residue. Residue aspartate 138 coordinates Mg(2+). Residue leucine 208 participates in ATP binding.

The protein belongs to the CD-NTase family. B06 subfamily. It depends on Mg(2+) as a cofactor.

The catalysed reaction is GTP + ATP = 3',3'-cGAMP + 2 diphosphate. It catalyses the reaction UTP + ATP = 3',3'-cUAMP + 2 diphosphate. The enzyme catalyses 2 ATP = 3',3'-c-di-AMP + 2 diphosphate. It carries out the reaction 2 GTP = 3',3'-c-di-GMP + 2 diphosphate. The catalysed reaction is UTP + GTP = 3',3'-cGMP-UMP + 2 diphosphate. Functionally, cyclic nucleotide synthase (second messenger synthase) of a CBASS antivirus system. CBASS (cyclic oligonucleotide-based antiphage signaling system) provides immunity against bacteriophages. The CD-NTase protein (CdnB, this protein) synthesizes cyclic nucleotides in response to infection; these serve as specific second messenger signals. The signals activate a diverse range of effectors, leading to bacterial cell death and thus abortive phage infection. The effector protein for this system is membrane protein Cap15. Catalyzes the synthesis of 3',3'-cyclic GMP-AMP (3'3'-cGAMP) from GTP and ATP, a second messenger in cell signal transduction. Also makes cyclic UMP-AMP, cyclic UMP-GMP, cyclic di-AMP and cyclic-di-GMP. In terms of biological role, protects E.coli against phage infection. When the CBASS operon (cdnB-cap15) is introduced in E.coli MG1655 there is about 100-fold protection against phage T2 and about 10-fold protection against phage T5 and T6. In Escherichia albertii, this protein is Cyclic GMP-AMP synthase.